The sequence spans 733 residues: Polyribonucleotide nucleotidyltransferase (733 aa).

2 residues coordinate Mg(2+): Asp-488 and Asp-494. One can recognise a KH domain in the interval 555–614 (PRIEMMTIPVEKIREVIGSGGKVIREIVEQTGAKINIEDDGTIKIASPDTKSIETAKSWI). In terms of domain architecture, S1 motif spans 624 to 692 (GTIYQGTVVK…ERGKIRLSMK (69 aa)). The disordered stretch occupies residues 698 to 733 (TGKEIPQDDLIKTEKEQNPDEKNKSEKKRHNRKKED). Over residues 702 to 721 (IPQDDLIKTEKEQNPDEKNK) the composition is skewed to basic and acidic residues. A compositionally biased stretch (basic residues) spans 722–733 (SEKKRHNRKKED).

This sequence belongs to the polyribonucleotide nucleotidyltransferase family. Mg(2+) serves as cofactor.

It localises to the cytoplasm. The catalysed reaction is RNA(n+1) + phosphate = RNA(n) + a ribonucleoside 5'-diphosphate. In terms of biological role, involved in mRNA degradation. Catalyzes the phosphorolysis of single-stranded polyribonucleotides processively in the 3'- to 5'-direction. The polypeptide is Polyribonucleotide nucleotidyltransferase (Bartonella bacilliformis (strain ATCC 35685 / KC583 / Herrer 020/F12,63)).